A 315-amino-acid chain; its full sequence is Aspartate carbamoyltransferase catalytic subunit (315 aa).

Carbamoyl phosphate-binding residues include R65 and T66. Position 93 (K93) interacts with L-aspartate. Carbamoyl phosphate-binding residues include R115, H143, and Q146. R176 and R231 together coordinate L-aspartate. Residues G272 and P273 each coordinate carbamoyl phosphate.

Belongs to the aspartate/ornithine carbamoyltransferase superfamily. ATCase family. Heterododecamer (2C3:3R2) of six catalytic PyrB chains organized as two trimers (C3), and six regulatory PyrI chains organized as three dimers (R2).

It catalyses the reaction carbamoyl phosphate + L-aspartate = N-carbamoyl-L-aspartate + phosphate + H(+). Its pathway is pyrimidine metabolism; UMP biosynthesis via de novo pathway; (S)-dihydroorotate from bicarbonate: step 2/3. Its function is as follows. Catalyzes the condensation of carbamoyl phosphate and aspartate to form carbamoyl aspartate and inorganic phosphate, the committed step in the de novo pyrimidine nucleotide biosynthesis pathway. This Hyphomonas neptunium (strain ATCC 15444) protein is Aspartate carbamoyltransferase catalytic subunit.